Reading from the N-terminus, the 59-residue chain is UPF0434 protein Shewmr7_2490 (59 aa).

It belongs to the UPF0434 family.

The polypeptide is UPF0434 protein Shewmr7_2490 (Shewanella sp. (strain MR-7)).